The chain runs to 253 residues: Cholesterol ring-cleaving hydrolase IpdB subunit (253 aa).

Belongs to the 3-oxoacid CoA-transferase subunit B family. Heterotetramer composed of 2 IpdA subunits and 2 IpdB subunits.

It catalyses the reaction (3E)-2-(2-carboxylatoethyl)-3-methyl-6-oxocyclohex-1-ene-1-carboxyl-CoA + H2O = 6-methyl-3,7-dioxodecanedioyl-CoA. It functions in the pathway steroid metabolism; cholesterol degradation. Its function is as follows. Involved in the final steps of cholesterol and steroid degradation. Opens the last steroid ring of cholesterol by catalyzing the hydrolysis of (3E)-2-(2-carboxylatoethyl)-3-methyl-6-oxocyclohex-1-ene-1-carboxyl-CoA (COCHEA-CoA) to 6-methyl-3,7-dioxodecanedioyl-CoA (MeDODA-CoA). The polypeptide is Cholesterol ring-cleaving hydrolase IpdB subunit (Rhodococcus jostii (strain RHA1)).